The primary structure comprises 186 residues: Mediator of RNA polymerase II transcription subunit 10a (186 aa).

This sequence belongs to the Mediator complex subunit 10 family. Mono-, di- and oligomers. Component of the Mediator complex. Interacts with GEBPL.

The protein localises to the nucleus. Its function is as follows. Component of the Mediator complex, a coactivator involved in the regulated transcription of nearly all RNA polymerase II-dependent genes. Mediator functions as a bridge to convey information from gene-specific regulatory proteins to the basal RNA polymerase II transcription machinery. The Mediator complex, having a compact conformation in its free form, is recruited to promoters by direct interactions with regulatory proteins and serves for the assembly of a functional pre-initiation complex with RNA polymerase II and the general transcription factors. This is Mediator of RNA polymerase II transcription subunit 10a from Arabidopsis thaliana (Mouse-ear cress).